Here is a 387-residue protein sequence, read N- to C-terminus: 1-deoxy-D-xylulose 5-phosphate reductoisomerase (387 aa).

Residues threonine 10, glycine 11, isoleucine 13, asparagine 38, and asparagine 122 each contribute to the NADPH site. Lysine 123 is a 1-deoxy-D-xylulose 5-phosphate binding site. An NADPH-binding site is contributed by glutamate 124. Aspartate 148 contacts Mn(2+). 1-deoxy-D-xylulose 5-phosphate is bound by residues serine 149, glutamate 150, serine 174, and histidine 197. Glutamate 150 is a binding site for Mn(2+). Residue glycine 203 coordinates NADPH. The 1-deoxy-D-xylulose 5-phosphate site is built by serine 210, asparagine 215, lysine 216, and glutamate 219. Glutamate 219 contributes to the Mn(2+) binding site.

The protein belongs to the DXR family. Mg(2+) serves as cofactor. Requires Mn(2+) as cofactor.

It carries out the reaction 2-C-methyl-D-erythritol 4-phosphate + NADP(+) = 1-deoxy-D-xylulose 5-phosphate + NADPH + H(+). It functions in the pathway isoprenoid biosynthesis; isopentenyl diphosphate biosynthesis via DXP pathway; isopentenyl diphosphate from 1-deoxy-D-xylulose 5-phosphate: step 1/6. In terms of biological role, catalyzes the NADPH-dependent rearrangement and reduction of 1-deoxy-D-xylulose-5-phosphate (DXP) to 2-C-methyl-D-erythritol 4-phosphate (MEP). This Ehrlichia canis (strain Jake) protein is 1-deoxy-D-xylulose 5-phosphate reductoisomerase.